The following is a 21-amino-acid chain: Pedibin (21 aa).

The disordered stretch occupies residues 1–21 (AGEDVSHELEEKEKALANHSE).

Morphogenetically active peptide. Active in foot development. The sequence is that of Pedibin from Hydra vulgaris (Hydra).